The following is a 130-amino-acid chain: Small ribosomal subunit protein uS8 (130 aa).

It belongs to the universal ribosomal protein uS8 family. In terms of assembly, part of the 30S ribosomal subunit.

One of the primary rRNA binding proteins, it binds directly to 16S rRNA central domain where it helps coordinate assembly of the platform of the 30S subunit. In Pyrobaculum arsenaticum (strain DSM 13514 / JCM 11321 / PZ6), this protein is Small ribosomal subunit protein uS8.